Here is a 474-residue protein sequence, read N- to C-terminus: Nitrosuccinate lyase (474 aa).

Ser295 acts as the Proton acceptor in catalysis. The fumarate site is built by Lys301 and Asn303. The active-site Proton donor is Arg334.

The protein belongs to the class-II fumarase/aspartase family.

It catalyses the reaction 2-nitrobutanedioate = fumarate + nitrite + H(+). Its function is as follows. Involved in the biosynthesis of desferrioxamine derivatives which have iron-binding properties and may act as siderophores. Catalyzes the formation of nitrous acid from nitrosuccinic acid (2-nitrobutanedioate) by elimination of its nitro group. The polypeptide is Nitrosuccinate lyase (Streptomyces davaonensis (strain DSM 101723 / JCM 4913 / KCC S-0913 / 768)).